The primary structure comprises 1381 residues: MKAPAVLTPGILLLLFTLVQKSNGECKEALTKSEMNVNMKYQLPNFTAETPIQNVILHEHHIFLGATNYIYVLNEEDLQKVAEHRTGPVLEHPDCFPCQDCSSKANLSGGVWKDNINMALVVDTYYDDQLISCGSVNRGTCQRHVFPHNHTADIQSEVHCIFSPQTEEPSQCPDCVVSALGTKVLLSVKERFLNFFVGNTINSSYVPDHSLHSISVRRLKETKDGFMFLTDQSYVDVLPEFRDSYPIKYVHAFESNNFIYFLAVQRETLNAQTFHTRIIRFCSINSALHSYMEMPLECILTEKRKKRSTKKEVFNILQAAYVSKPGAQLARQIGASLNDDILFGVFAQSKPDSAEPMDRSAVCAFPIKYVNDFFNKIVNKNNVRCLQHFYGPNHEHCFNRTFQRNFLGCETRRDEYRTEFTTALQRIDLFAGQFNKVLLTSISTFVKGDLTIANLGTSEGRFIQIVVSRSVPSTPHVNFLLDSHPVSPEVIVEHPLNHNGYTLVVTGKKITKIPLNGLGCRHFQSCSQCLSAPSFVQCGWCHDKCVRSEECSSGTWTQETCLPTIYKVFPTSAPLEGGTRLTICGWDFGFRRNNKFDLKKTRVLLGNESCTLTLSESTMNTLKCTVGPAMNEHFNMSIIISNAHGTTQYSTFSYVDPIITSISPRYGPMSGGTLLTLTGNYLNSGNSRHISIGGKTCTLKSVSNSILECYTPAQTISTEFPVKLKIDLANRETSIFSYREDPIVYEIHPTKSFISGGSTITGIGKNLNSVSVPRMVINLHEARRNFTVACQHRSNSEIICCTTPSLQQLNLQLPLKTKAFFMLDGILSKYFDLIYVHNPVFKPFEKPVMISMGNENVLEIKGNDIDPEAVKGEVLKVGNKSCENIHLHSEAVLCTVPSDLLKLNSELNIEWKQAISSTVLGKVIVQPDQNFTGLIAGVVSISIALLLLLGLFLWLKKRKQIKDLGSELVRYDARVHTPHLDRLVSARSVSPTTEMVSNESVDYRATFPEDQFPNSSQNGSCRQVQYPLTDMSPILTSGDSDISSPLLQNTVHIDLSALNPELVQAVQHVVIGPSSLIVHFNEVIGRGHFGCVYHGTLLDNDGKKIHCAVKSLNRITDIGEVSQFLTEGIIMKDFSHPNVLSLLGICLRSEGSPLVVLPYMKHGDLRNFIRNETHNPTVKDLIGFGLQVAKGMKYLASKKFVHRDLAARNCMLDEKFTVKVADFGLARDMYDKEYYSVHNKTGAKLPVKWMALESLQTQKFTTKSDVWSFGVLLWELMTRGAPPYPDVNTFDITVYLLQGRRLLQPEYCPDPLYEVMLKCWHPKAEMRPSFSELVSRISAIFSTFIGEHYVHVNATYVNVKCVAPYPSLLSSQDNADGELDT.

Residues 1 to 24 (MKAPAVLTPGILLLLFTLVQKSNG) form the signal peptide. At 25–932 (ECKEALTKSE…VIVQPDQNFT (908 aa)) the chain is on the extracellular side. The 489-residue stretch at 27–515 (KEALTKSEMN…TGKKITKIPL (489 aa)) folds into the Sema domain. Residue Asn45 is glycosylated (N-linked (GlcNAc...) asparagine). 4 disulfides stabilise this stretch: Cys95-Cys101, Cys98-Cys160, Cys133-Cys141, and Cys172-Cys175. A glycan (N-linked (GlcNAc...) asparagine) is linked at Asn106. Asn149 carries N-linked (GlcNAc...) asparagine glycosylation. N-linked (GlcNAc...) asparagine glycosylation is present at Asn202. 2 cysteine pairs are disulfide-bonded: Cys298-Cys363 and Cys385-Cys397. Asn399 is a glycosylation site (N-linked (GlcNAc...) asparagine). 4 cysteine pairs are disulfide-bonded: Cys520/Cys538, Cys526/Cys561, Cys529/Cys545, and Cys541/Cys551. 3 IPT/TIG domains span residues 563-655 (PTIY…FSYV), 657-739 (PIIT…FSYR), and 742-836 (PIVY…LIYV). Thr582 carries O-linked (Man) threonine glycosylation. 2 N-linked (GlcNAc...) asparagine glycosylation sites follow: Asn607 and Asn635. 2 O-linked (Man) threonine glycosylation sites follow: Thr676 and Thr761. N-linked (GlcNAc...) asparagine glycosylation is found at Asn785, Asn879, and Asn930. The chain crosses the membrane as a helical span at residues 933–955 (GLIAGVVSISIALLLLLGLFLWL). Over 956-1381 (KKRKQIKDLG…QDNADGELDT (426 aa)) the chain is Cytoplasmic. Ser966 is subject to Phosphoserine. Thr977 is subject to Phosphothreonine. Phosphoserine is present on residues Ser990, Ser997, and Ser1000. A Phosphotyrosine modification is found at Tyr1003. Positions 1078-1345 (VHFNEVIGRG…RISAIFSTFI (268 aa)) constitute a Protein kinase domain. ATP is bound by residues 1084–1092 (IGRGHFGCV) and Lys1110. Catalysis depends on Asp1204, which acts as the Proton acceptor. The segment at 1212-1381 (LDEKFTVKVA…QDNADGELDT (170 aa)) is interaction with RANBP9. Phosphotyrosine is present on Tyr1230. Phosphotyrosine; by autocatalysis occurs at positions 1234 and 1235. Thr1289 is subject to Phosphothreonine. The segment at 1320–1359 (WHPKAEMRPSFSELVSRISAIFSTFIGEHYVHVNATYVNV) is interaction with MUC20. Tyr1349 and Tyr1356 each carry phosphotyrosine; by autocatalysis. A Phosphotyrosine modification is found at Tyr1365.

The protein belongs to the protein kinase superfamily. Tyr protein kinase family. Heterodimer made of an alpha chain (50 kDa) and a beta chain (145 kDa) which are disulfide linked. Binds PLXNB1. Interacts when phosphorylated with downstream effectors including STAT3, PIK3R1, SRC, PCLG1, GRB2 and GAB1. Interacts with SPSB1, SPSB2 and SPSB4. Interacts with INPP5D/SHIP1. When phosphorylated at Tyr-1356, interacts with INPPL1/SHIP2. Interacts with RANBP9 and RANBP10, as well as SPSB1, SPSB2, SPSB3 and SPSB4. SPSB1 binding occurs in the presence and in the absence of HGF, however HGF treatment has a positive effect on this interaction. Interacts with MUC20; prevents interaction with GRB2 and suppresses hepatocyte growth factor-induced cell proliferation. Interacts with GRB10. Interacts with PTPN1 and PTPN2. Interacts with HSP90AA1 and HSP90AB1; the interaction suppresses MET kinase activity. Interacts with tensin TNS3. Interacts (when phosphorylated) with tensin TNS4 (via SH2 domain); the interaction increases MET protein stability by inhibiting MET endocytosis and subsequent lysosomal degradation. In terms of processing, autophosphorylated in response to ligand binding on Tyr-1234 and Tyr-1235 in the kinase domain leading to further phosphorylation of Tyr-1349 and Tyr-1356 in the C-terminal multifunctional docking site. Dephosphorylated by PTPRJ at Tyr-1349 and Tyr-1365. Dephosphorylated by PTPN1 and PTPN2. Post-translationally, ubiquitinated. Ubiquitination by CBL regulates the receptor stability and activity through proteasomal degradation. O-mannosylation of IPT/TIG domains by TMEM260 is required for protein maturation. O-mannosylated residues are composed of single mannose glycans that are not elongated or modified.

It is found in the membrane. The enzyme catalyses L-tyrosyl-[protein] + ATP = O-phospho-L-tyrosyl-[protein] + ADP + H(+). In its inactive state, the C-terminal tail interacts with the catalytic domain and inhibits the kinase activity. Upon ligand binding, the C-terminal tail is displaced and becomes phosphorylated, thus increasing the kinase activity. In terms of biological role, receptor tyrosine kinase that transduces signals from the extracellular matrix into the cytoplasm by binding to hepatocyte growth factor/HGF ligand. Regulates many physiological processes including proliferation, scattering, morphogenesis and survival. Ligand binding at the cell surface induces autophosphorylation of MET on its intracellular domain that provides docking sites for downstream signaling molecules. Following activation by ligand, interacts with the PI3-kinase subunit PIK3R1, PLCG1, SRC, GRB2, STAT3 or the adapter GAB1. Recruitment of these downstream effectors by MET leads to the activation of several signaling cascades including the RAS-ERK, PI3 kinase-AKT, or PLCgamma-PKC. The RAS-ERK activation is associated with the morphogenetic effects while PI3K/AKT coordinates prosurvival effects. During embryonic development, MET signaling plays a role in gastrulation, development and migration of muscles and neuronal precursors, angiogenesis and kidney formation. In adults, participates in wound healing as well as organ regeneration and tissue remodeling. Also promotes differentiation and proliferation of hematopoietic cells. This is Hepatocyte growth factor receptor (MET) from Saimiri boliviensis boliviensis (Bolivian squirrel monkey).